A 132-amino-acid chain; its full sequence is Translation initiation factor 5A (132 aa).

Lys-36 carries the hypusine modification.

It belongs to the eIF-5A family.

It localises to the cytoplasm. Functions by promoting the formation of the first peptide bond. This chain is Translation initiation factor 5A (eIF5A), found in Pyrobaculum neutrophilum (strain DSM 2338 / JCM 9278 / NBRC 100436 / V24Sta) (Thermoproteus neutrophilus).